The primary structure comprises 760 residues: Cellulose synthase-like protein G1 (760 aa).

Helical transmembrane passes span 28–48 (IYAIFHTCGIIALMYHHVHSL) and 54–74 (TLITCLLLLSDIVLAFMWATT). Active-site residues include Asp-142 and Asp-447. Transmembrane regions (helical) follow at residues 530–550 (IPLTVYGLLPQLALISGVSVF), 558–578 (FWLYIILFFGAYAQDLSDFLL), 593–613 (LMIKGLSSFFFGFIEFILKTL), 656–676 (VAIVNLLAFVWGLYGILFCGG), and 680–700 (LELMLVSFAVVNCLPIYGAMV).

It belongs to the glycosyltransferase 2 family. Plant cellulose synthase-like G subfamily. In terms of tissue distribution, expressed in young seedlings, primarily in the vascular tissue.

The protein localises to the golgi apparatus membrane. Functionally, thought to be a Golgi-localized beta-glycan synthase that polymerize the backbones of noncellulosic polysaccharides (hemicelluloses) of plant cell wall. The polypeptide is Cellulose synthase-like protein G1 (CSLG1) (Arabidopsis thaliana (Mouse-ear cress)).